A 609-amino-acid chain; its full sequence is MSTGFNAQSFLRMVSSSAGVYRMYDVKGDVIYVGKAKDLKKRLSSYFRKNLGNVKTQALVSHIHHIDVTLTHSETDALLLENDYIKQYMPKYNVLLRDDKSYPYIFLSQHEHPRLAYHRGPQREKGYYFGPYPNGGAVRESLHLMQKLFPIRQCDDLYYKSRTRPCLQYQLSRCSAPCVGKVSNAEYDEQVKLASLFLKGKDKQVISELVAKMEEAAGQQAYEQAARFRDQIMALRRVAEQQEVSGNTGDMDVIGVHYASGIACFHLLFIREGKIFGSRSYYPTVPAQTDIEEVLRSFLLQFYLNADIQRTIPKEVVISHHFEELHELEAAVSEALNKKFSIKTNVRADRASFLRLALTNATNAVMTRLSHKNTVEQRFVLLEEILELNAPIQRMECFDISHTMGESTVASCVVFNREGPHKAEYRRYNIEGITPGDDYAAMKQAISRRFDKIDASGKIPDILFIDGGLGQLRIAQQIVDEKFVNLDKAPQLIGVAKGESRKPGLETLIFGDTETSFSLEDDSPALHLIQHIRDESHRFAITGHRNRRQKTRNTSTLESIPGIGPKRRKALLQHLGGLQEVKGASVAELAKVPGISIEMAQTIHDALRG.

In terms of domain architecture, GIY-YIG spans 16-94 (SSAGVYRMYD…IKQYMPKYNV (79 aa)). The UVR domain maps to 203 to 238 (KQVISELVAKMEEAAGQQAYEQAARFRDQIMALRRV).

Belongs to the UvrC family. In terms of assembly, interacts with UvrB in an incision complex.

It is found in the cytoplasm. In terms of biological role, the UvrABC repair system catalyzes the recognition and processing of DNA lesions. UvrC both incises the 5' and 3' sides of the lesion. The N-terminal half is responsible for the 3' incision and the C-terminal half is responsible for the 5' incision. The sequence is that of UvrABC system protein C from Shewanella sp. (strain ANA-3).